A 332-amino-acid polypeptide reads, in one-letter code: Ferredoxin--NADP reductase (332 aa).

Residues Thr20, Glu39, Gln47, Tyr52, Val92, Phe126, Asp288, and Thr329 each contribute to the FAD site.

This sequence belongs to the ferredoxin--NADP reductase type 2 family. As to quaternary structure, homodimer. The cofactor is FAD.

The enzyme catalyses 2 reduced [2Fe-2S]-[ferredoxin] + NADP(+) + H(+) = 2 oxidized [2Fe-2S]-[ferredoxin] + NADPH. The chain is Ferredoxin--NADP reductase from Geobacillus kaustophilus (strain HTA426).